We begin with the raw amino-acid sequence, 324 residues long: Beta-ketoacyl-[acyl-carrier-protein] synthase III (324 aa).

Active-site residues include Cys-114 and His-251. Residues 252–256 are ACP-binding; that stretch reads QANKR. Asn-281 is an active-site residue.

It belongs to the thiolase-like superfamily. FabH family. As to quaternary structure, homodimer.

The protein localises to the cytoplasm. The catalysed reaction is malonyl-[ACP] + acetyl-CoA + H(+) = 3-oxobutanoyl-[ACP] + CO2 + CoA. It participates in lipid metabolism; fatty acid biosynthesis. Functionally, catalyzes the condensation reaction of fatty acid synthesis by the addition to an acyl acceptor of two carbons from malonyl-ACP. Catalyzes the first condensation reaction which initiates fatty acid synthesis and may therefore play a role in governing the total rate of fatty acid production. Possesses both acetoacetyl-ACP synthase and acetyl transacylase activities. Its substrate specificity determines the biosynthesis of branched-chain and/or straight-chain of fatty acids. This Bradyrhizobium sp. (strain BTAi1 / ATCC BAA-1182) protein is Beta-ketoacyl-[acyl-carrier-protein] synthase III.